The chain runs to 618 residues: MKQSKMLIPTLREMPSDAQVISHALMMRAGYVRQVSAGIYAYLPLANRTIEKLKTIMRQEFDKIGAVEMLAPALLTADLWRESGRYETYGDDLYKLKNRESSDFILGPTHEETFTTLVRDAVKSYKQLPLNLYQIQAKYRDEKRPRNGLLRTREFIMKDGYSFHQNYEDLDVTYEDYRKAYEAIFTRSGLEFKGIIGDGGAMGGKDSQEFMAITPERTDLNRWLVLDKSIPSLSDIPEDVLEEIKKELASWLISGEDTIAYSSESSYAANLEMASNAFSPTTKVAVAEDLKEVATPDCKTIDQVADFLNISAETTIKTLLFIADEKPVVALLVGNDQVNDVKLKNYLGADFLDPATEEEAFQVFGAHFGSLGPVNLPDSVRIIADRNVQNLANAVSGANKDGFHLTGVNPERDFKAEFVDIREVKEGEASPDGHGHLQFARGIEVGHIFKLGTRYSDSLGANILDENGKSIPIVMGCYGIGVSRILSAVIEQHARLFVSKTPKGEYRYSWGINFPKELAPFDIHLITVNTKDEEAQTLTDKLEKELMTKGYEVLTDDRNERVGSKFSDSDLIGLPIRITVGKKASEGIVEIKIKASGDSIEVNAENVIETLEILTKDH.

It belongs to the class-II aminoacyl-tRNA synthetase family. ProS type 1 subfamily. Homodimer.

It is found in the cytoplasm. It catalyses the reaction tRNA(Pro) + L-proline + ATP = L-prolyl-tRNA(Pro) + AMP + diphosphate. Catalyzes the attachment of proline to tRNA(Pro) in a two-step reaction: proline is first activated by ATP to form Pro-AMP and then transferred to the acceptor end of tRNA(Pro). As ProRS can inadvertently accommodate and process non-cognate amino acids such as alanine and cysteine, to avoid such errors it has two additional distinct editing activities against alanine. One activity is designated as 'pretransfer' editing and involves the tRNA(Pro)-independent hydrolysis of activated Ala-AMP. The other activity is designated 'posttransfer' editing and involves deacylation of mischarged Ala-tRNA(Pro). The misacylated Cys-tRNA(Pro) is not edited by ProRS. This chain is Proline--tRNA ligase, found in Streptococcus uberis (strain ATCC BAA-854 / 0140J).